Here is a 119-residue protein sequence, read N- to C-terminus: Ribonuclease P protein component (119 aa).

This sequence belongs to the RnpA family. In terms of assembly, consists of a catalytic RNA component (M1 or rnpB) and a protein subunit.

The enzyme catalyses Endonucleolytic cleavage of RNA, removing 5'-extranucleotides from tRNA precursor.. Its function is as follows. RNaseP catalyzes the removal of the 5'-leader sequence from pre-tRNA to produce the mature 5'-terminus. It can also cleave other RNA substrates such as 4.5S RNA. The protein component plays an auxiliary but essential role in vivo by binding to the 5'-leader sequence and broadening the substrate specificity of the ribozyme. This chain is Ribonuclease P protein component, found in Listeria innocua serovar 6a (strain ATCC BAA-680 / CLIP 11262).